We begin with the raw amino-acid sequence, 190 residues long: MKVGVLALQGAVAEHIRLIEAVGGEGVVVKRAEQLAELDGLIIPGGESTTIGKLMRRYGFIEAIRDFSNQGKAVFGTCAGLIVIADKIAGQEEAHLGLMDMTVQRNAFGRQRESFETDLPVKGIDRPVRAVFIRAPLIDQVGNGVDVLSEYNGQIVAARQGHLLAASFHPELTDDSSMHAYFLDMIREAR.

46–48 (GES) is an L-glutamine binding site. Catalysis depends on Cys-78, which acts as the Nucleophile. L-glutamine contacts are provided by residues Arg-105 and 133–134 (IR). Active-site charge relay system residues include His-169 and Glu-171.

The protein belongs to the glutaminase PdxT/SNO family. As to quaternary structure, in the presence of PdxS, forms a dodecamer of heterodimers. Only shows activity in the heterodimer.

It catalyses the reaction aldehydo-D-ribose 5-phosphate + D-glyceraldehyde 3-phosphate + L-glutamine = pyridoxal 5'-phosphate + L-glutamate + phosphate + 3 H2O + H(+). It carries out the reaction L-glutamine + H2O = L-glutamate + NH4(+). It functions in the pathway cofactor biosynthesis; pyridoxal 5'-phosphate biosynthesis. In terms of biological role, catalyzes the hydrolysis of glutamine to glutamate and ammonia as part of the biosynthesis of pyridoxal 5'-phosphate. The resulting ammonia molecule is channeled to the active site of PdxS. This Niallia circulans (Bacillus circulans) protein is Pyridoxal 5'-phosphate synthase subunit PdxT.